Consider the following 132-residue polypeptide: Interferon-induced transmembrane protein 5 (132 aa).

Residues 1 to 11 are compositionally biased toward basic and acidic residues; that stretch reads MDTAYPREDTR. The tract at residues 1 to 21 is disordered; sequence MDTAYPREDTRAPTPSKAGAH. Topologically, residues 1–36 are extracellular; it reads MDTAYPREDTRAPTPSKAGAHTALTLGAPHPPPRDH. Residues 37–57 traverse the membrane as a helical segment; that stretch reads LIWSVFSTLYLNLCCLGFLAL. Residues Cys-50, Cys-51, and Cys-84 are each lipidated (S-palmitoyl cysteine). At 58–86 the chain is on the cytoplasmic side; it reads AYSIKARDQKVVGDLEAARRFGSKAKCYN. Residues 87-107 traverse the membrane as a helical segment; sequence ILAAMWTLVPPLLLLGLVVTG. Residues 108–132 are Extracellular-facing; it reads ALHLARLAKDSAAFFSTKFDDADYD.

It belongs to the CD225/Dispanin family. In terms of assembly, interacts with FKBP11. In terms of processing, palmitoylated. Detected in osteoblasts and fibroblasts (at protein level). Detected in bone.

The protein localises to the cell membrane. Functionally, required for normal bone mineralization. This is Interferon-induced transmembrane protein 5 (IFITM5) from Homo sapiens (Human).